The chain runs to 483 residues: MNKKIRVRYAPSPTGLLHIGNARTALFNYLFARHHGGDFIIRIEDTDRERHVEDGERSQLENLRWLGMDWDESPETHENYRQSERLPLYQKYIDQLLAEGKAYYSYKTPEELEADHAKQEAAGIPPHYINEYAGMSDDEKAAYIAERKAQNIEPVVRISVDEKAIYKWNDIVKGEIEFEGGNIGGDWVIQKRDGYPTYNFAVVVDDHDMQISHVIRGDDHIANTPKQLVVYDALGWEAPQFGHMTLIINSETGKKLSKRDTNTLQFIEDYRKKGYMSDAIFNFIALLGWNPGGEKEIFSREELIELFDENRLSKSPAAFDQKKLDWMDNEYIKNADFAKVFELTKPFLLAANRFDERAQELVKLYQPQMKSADEVVELTDLFYGDFPELTDEAREMLAAETTPLALSTFRAKLAELPESDFTVENIFPLFKATQKETGVKGKMLWMPIRIAASGSMHGPELPETIALLGKEKVLAHLDAALNK.

The short motif at 11–21 (PSPTGLLHIGN) is the 'HIGH' region element. The 'KMSKS' region signature appears at 255–259 (KLSKR). Lys258 lines the ATP pocket.

This sequence belongs to the class-I aminoacyl-tRNA synthetase family. Glutamate--tRNA ligase type 1 subfamily. In terms of assembly, monomer.

Its subcellular location is the cytoplasm. The enzyme catalyses tRNA(Glu) + L-glutamate + ATP = L-glutamyl-tRNA(Glu) + AMP + diphosphate. Catalyzes the attachment of glutamate to tRNA(Glu) in a two-step reaction: glutamate is first activated by ATP to form Glu-AMP and then transferred to the acceptor end of tRNA(Glu). This chain is Glutamate--tRNA ligase, found in Lactococcus lactis subsp. cremoris (strain SK11).